An 803-amino-acid polypeptide reads, in one-letter code: Subtilisin-like protease SBT5.5 (803 aa).

An N-terminal signal peptide occupies residues 1-22 (MKRIFGIFIFLSLLLFLVPLLA). Residues 23 to 112 (SCTKEKQVYI…KSDPRKYKIH (90 aa)) constitute a propeptide, activation peptide. An Inhibitor I9 domain is found at 30–108 (VYIVYFGEHK…VSVFKSDPRK (79 aa)). One can recognise a Peptidase S8 domain in the interval 140–656 (KYDVNDRFRV…SRHFRPTKAA (517 aa)). Residue Asp-169 is the Charge relay system of the active site. N-linked (GlcNAc...) asparagine glycosylation is present at Asn-202. His-244 serves as the catalytic Charge relay system. Positions 409-504 (YAPLVYAPDV…VFSSTVDRIL (96 aa)) constitute a PA domain. Ser-589 (charge relay system) is an active-site residue. Asn-725 carries N-linked (GlcNAc...) asparagine glycosylation.

Belongs to the peptidase S8 family.

It is found in the secreted. The polypeptide is Subtilisin-like protease SBT5.5 (Arabidopsis thaliana (Mouse-ear cress)).